A 296-amino-acid polypeptide reads, in one-letter code: Light-independent protochlorophyllide reductase iron-sulfur ATP-binding protein (296 aa).

Residues 39–44 (GIGKST) and Lys-68 each bind ATP. A Mg(2+)-binding site is contributed by Ser-43. Residues Cys-124 and Cys-158 each coordinate [4Fe-4S] cluster. ATP is bound at residue 209–210 (NR).

Belongs to the NifH/BchL/ChlL family. In terms of assembly, homodimer. Protochlorophyllide reductase is composed of three subunits; ChlL, ChlN and ChlB. It depends on [4Fe-4S] cluster as a cofactor.

The catalysed reaction is chlorophyllide a + oxidized 2[4Fe-4S]-[ferredoxin] + 2 ADP + 2 phosphate = protochlorophyllide a + reduced 2[4Fe-4S]-[ferredoxin] + 2 ATP + 2 H2O. The protein operates within porphyrin-containing compound metabolism; chlorophyll biosynthesis (light-independent). Component of the dark-operative protochlorophyllide reductase (DPOR) that uses Mg-ATP and reduced ferredoxin to reduce ring D of protochlorophyllide (Pchlide) to form chlorophyllide a (Chlide). This reaction is light-independent. The L component serves as a unique electron donor to the NB-component of the complex, and binds Mg-ATP. In Synechococcus sp. (strain WH7803), this protein is Light-independent protochlorophyllide reductase iron-sulfur ATP-binding protein.